The following is a 1016-amino-acid chain: Nonsense-mediated mRNA decay factor SMG5 (1016 aa).

The residue at position 2 (serine 2) is an N-acetylserine. A phosphoserine mark is found at serine 2 and serine 423. 2 disordered regions span residues 408-561 (NPVP…PSEA) and 594-637 (PTTN…RSCR). Basic residues predominate over residues 449–466 (KSRKFSRLSCLRRRRHPP). Residues 594 to 603 (PTTNPHTSAS) are compositionally biased toward polar residues. Positions 619-628 (ASEEGSESEG) are enriched in acidic residues. Residues 798–841 (QSEQESLLQQAQAQFRMAQEEARRNRLMRDMAQLRLQLEVSQLE) adopt a coiled-coil conformation. The region spanning 872 to 995 (RQLATSGRFI…GPMQAALQAA (124 aa)) is the PINc domain.

In terms of assembly, interacts with TERT, PPP2CA and SMG1. Part of a complex that contains SMG1, SMG5, SMG7, PPP2CA, a short isoform of UPF3A (isoform UPF3AS, but not isoform UPF3AL) and phosphorylated UPF1. Not detected in complexes that contain unphosphorylated UPF1. In terms of tissue distribution, ubiquitous.

The protein localises to the cytoplasm. It localises to the nucleus. Its function is as follows. Plays a role in nonsense-mediated mRNA decay. Does not have RNase activity by itself. Promotes dephosphorylation of UPF1. Together with SMG7 is thought to provide a link to the mRNA degradation machinery involving exonucleolytic pathways, and to serve as an adapter for UPF1 to protein phosphatase 2A (PP2A), thereby triggering UPF1 dephosphorylation. Necessary for TERT activity. This Homo sapiens (Human) protein is Nonsense-mediated mRNA decay factor SMG5.